We begin with the raw amino-acid sequence, 203 residues long: ATP-dependent Clp protease proteolytic subunit (203 aa).

Ser-107 functions as the Nucleophile in the catalytic mechanism. His-132 is an active-site residue.

It belongs to the peptidase S14 family. As to quaternary structure, fourteen ClpP subunits assemble into 2 heptameric rings which stack back to back to give a disk-like structure with a central cavity, resembling the structure of eukaryotic proteasomes.

It is found in the cytoplasm. The enzyme catalyses Hydrolysis of proteins to small peptides in the presence of ATP and magnesium. alpha-casein is the usual test substrate. In the absence of ATP, only oligopeptides shorter than five residues are hydrolyzed (such as succinyl-Leu-Tyr-|-NHMec, and Leu-Tyr-Leu-|-Tyr-Trp, in which cleavage of the -Tyr-|-Leu- and -Tyr-|-Trp bonds also occurs).. In terms of biological role, cleaves peptides in various proteins in a process that requires ATP hydrolysis. Has a chymotrypsin-like activity. Plays a major role in the degradation of misfolded proteins. The polypeptide is ATP-dependent Clp protease proteolytic subunit (Shewanella piezotolerans (strain WP3 / JCM 13877)).